A 252-amino-acid polypeptide reads, in one-letter code: D-aminoacyl-tRNA deacylase (252 aa).

This sequence belongs to the DtdA deacylase family. In terms of assembly, monomer. The cofactor is Zn(2+).

It carries out the reaction a D-aminoacyl-tRNA + H2O = a tRNA + a D-alpha-amino acid + H(+). The catalysed reaction is glycyl-tRNA(Ala) + H2O = tRNA(Ala) + glycine + H(+). Its function is as follows. D-aminoacyl-tRNA deacylase with broad substrate specificity. By recycling D-aminoacyl-tRNA to D-amino acids and free tRNA molecules, this enzyme counteracts the toxicity associated with the formation of D-aminoacyl-tRNA entities in vivo. In Pyrobaculum islandicum (strain DSM 4184 / JCM 9189 / GEO3), this protein is D-aminoacyl-tRNA deacylase.